A 274-amino-acid chain; its full sequence is Karrikin insensitive 2 receptor IA (274 aa).

Ser-95 (nucleophile) is an active-site residue. Active-site residues include Asp-217 and His-246.

Belongs to the AB hydrolase superfamily. As to quaternary structure, interacts with MAX2A and MAX2B in the presence of (-)-germacrene D, thus forming an E3 SCF ubiquitin ligase complex (ASK-cullin-F-box) containing MAX2A or MAX2B and KAI2IA recognizing SMAX1A; this leads to the subsequent degradation of the transcriptional corepressor SMAX1A, thus triggering the activation of a downstream signaling cascade. As to expression, strongly expressed in stigma.

The protein resides in the nucleus. Its subcellular location is the cytoplasm. Hydrolysis activity toward yoshimulactone green (YLG), a fluorescent agonist to strigolactone receptor, is inhibited by (-)-germacrene D and GR24, a synthetic strigolactone analog. Hydrolase involved in the olfaction of sesquiterpene volatile organic compounds (VOCs) during volatile plant communication in a MAX2 proteins-dependent manner. Acts as a karrikin-insensitive receptor that stereospecifically perceives and binds to (-)-germacrene D, particularly in stigmas, and triggers a signaling cascade influencing plant fitness, as the result of reproductive organ growth-promoting effect; this process involves an interaction with MAX2 proteins (e.g. MAX2A and MAX2B) and the subsequent degradation of SMAX1a, a transcriptional corepressor. This chain is Karrikin insensitive 2 receptor IA, found in Petunia hybrida (Petunia).